Here is a 1148-residue protein sequence, read N- to C-terminus: Putative ATP-dependent RNA helicase rha-2 (1148 aa).

Residues 1–10 (MGKRKTKEDN) are compositionally biased toward basic and acidic residues. Disordered stretches follow at residues 1–51 (MGKR…FAKE) and 101–163 (STKL…DAGN). Residues 138–160 (PTDDESSSEEEEEEEEGDNDIED) show a composition bias toward acidic residues. The region spanning 246–412 (VEAINENLVT…KLFPLLTPKV (167 aa)) is the Helicase ATP-binding domain. 259–266 (GETGSGKT) serves as a coordination point for ATP. Positions 355–358 (DEAH) match the DEAH box motif. The Helicase C-terminal domain occupies 463–703 (EVKQLITKLK…QLVLHLKSMN (241 aa)).

This sequence belongs to the DEAD box helicase family. DEAH subfamily.

It catalyses the reaction ATP + H2O = ADP + phosphate + H(+). In terms of biological role, probable ATP-binding RNA helicase. This Caenorhabditis elegans protein is Putative ATP-dependent RNA helicase rha-2 (rha-2).